Consider the following 278-residue polypeptide: 4-deoxy-L-threo-5-hexosulose-uronate ketol-isomerase (278 aa).

Residues His-196, His-198, Glu-203, and His-245 each contribute to the Zn(2+) site.

Belongs to the KduI family. As to quaternary structure, homohexamer. Zn(2+) is required as a cofactor.

The enzyme catalyses 5-dehydro-4-deoxy-D-glucuronate = 3-deoxy-D-glycero-2,5-hexodiulosonate. It functions in the pathway glycan metabolism; pectin degradation; 2-dehydro-3-deoxy-D-gluconate from pectin: step 4/5. In terms of biological role, catalyzes the isomerization of 5-dehydro-4-deoxy-D-glucuronate to 3-deoxy-D-glycero-2,5-hexodiulosonate. This Escherichia coli (strain SMS-3-5 / SECEC) protein is 4-deoxy-L-threo-5-hexosulose-uronate ketol-isomerase.